Consider the following 251-residue polypeptide: Hydroxyacylglutathione hydrolase (251 aa).

Positions 53, 55, 57, 58, 110, 127, and 165 each coordinate Zn(2+).

The protein belongs to the metallo-beta-lactamase superfamily. Glyoxalase II family. Monomer. It depends on Zn(2+) as a cofactor.

The catalysed reaction is an S-(2-hydroxyacyl)glutathione + H2O = a 2-hydroxy carboxylate + glutathione + H(+). It participates in secondary metabolite metabolism; methylglyoxal degradation; (R)-lactate from methylglyoxal: step 2/2. Thiolesterase that catalyzes the hydrolysis of S-D-lactoyl-glutathione to form glutathione and D-lactic acid. This chain is Hydroxyacylglutathione hydrolase, found in Shigella boydii serotype 18 (strain CDC 3083-94 / BS512).